The chain runs to 439 residues: Chromosomal replication initiator protein DnaA (439 aa).

Positions M1–V72 are domain I, interacts with DnaA modulators. Residues V72 to S99 form a domain II region. A domain III, AAA+ region region spans residues G100–V322. Residues G144, G146, K147, and T148 each coordinate ATP. Residues K323–I439 form a domain IV, binds dsDNA region.

It belongs to the DnaA family. In terms of assembly, oligomerizes as a right-handed, spiral filament on DNA at oriC.

Its subcellular location is the cytoplasm. Plays an essential role in the initiation and regulation of chromosomal replication. ATP-DnaA binds to the origin of replication (oriC) to initiate formation of the DNA replication initiation complex once per cell cycle. Binds the DnaA box (a 9 base pair repeat at the origin) and separates the double-stranded (ds)DNA. Forms a right-handed helical filament on oriC DNA; dsDNA binds to the exterior of the filament while single-stranded (ss)DNA is stabiized in the filament's interior. The ATP-DnaA-oriC complex binds and stabilizes one strand of the AT-rich DNA unwinding element (DUE), permitting loading of DNA polymerase. After initiation quickly degrades to an ADP-DnaA complex that is not apt for DNA replication. Binds acidic phospholipids. In Mycoplasma pneumoniae (strain ATCC 29342 / M129 / Subtype 1) (Mycoplasmoides pneumoniae), this protein is Chromosomal replication initiator protein DnaA.